We begin with the raw amino-acid sequence, 369 residues long: Protein FAM187B (369 aa).

Positions 1 to 17 (MPPMLWLLLHFAAPALG) are cleaved as a signal peptide. Residues 18–335 (FYFSISCPSG…RADSVLKGLK (318 aa)) are Extracellular-facing. N-linked (GlcNAc...) asparagine glycosylation is found at Asn-45, Asn-68, and Asn-130. The helical transmembrane segment at 336-356 (LVLLVVTVLALLGALLKCIHP) threads the bilayer. At 357 to 369 (SPGRRSTQVLVVK) the chain is on the cytoplasmic side.

The protein belongs to the FAM187 family.

It is found in the membrane. This Homo sapiens (Human) protein is Protein FAM187B (FAM187B).